Here is a 334-residue protein sequence, read N- to C-terminus: Glycerol-1-phosphate dehydrogenase [NAD(P)+] (334 aa).

NAD(+)-binding positions include 77–81 (GKPID) and 99–102 (TTAS). Asp-104 provides a ligand contact to substrate. Position 108 (Ser-108) interacts with NAD(+). Asp-147 contacts substrate. 2 residues coordinate Zn(2+): Asp-147 and His-225. Position 229 (His-229) interacts with substrate. His-246 is a Zn(2+) binding site.

Belongs to the glycerol-1-phosphate dehydrogenase family. Requires Zn(2+) as cofactor.

The protein localises to the cytoplasm. The enzyme catalyses sn-glycerol 1-phosphate + NAD(+) = dihydroxyacetone phosphate + NADH + H(+). The catalysed reaction is sn-glycerol 1-phosphate + NADP(+) = dihydroxyacetone phosphate + NADPH + H(+). Its pathway is membrane lipid metabolism; glycerophospholipid metabolism. Catalyzes the NAD(P)H-dependent reduction of dihydroxyacetonephosphate (DHAP or glycerone phosphate) to glycerol 1-phosphate (G1P). The G1P thus generated is used as the glycerophosphate backbone of phospholipids in the cellular membranes of Archaea. This chain is Glycerol-1-phosphate dehydrogenase [NAD(P)+], found in Methanococcus vannielii (strain ATCC 35089 / DSM 1224 / JCM 13029 / OCM 148 / SB).